We begin with the raw amino-acid sequence, 502 residues long: Lysine--tRNA ligase (502 aa).

Mg(2+)-binding residues include E413 and E420.

Belongs to the class-II aminoacyl-tRNA synthetase family. Homodimer. Requires Mg(2+) as cofactor.

Its subcellular location is the cytoplasm. It catalyses the reaction tRNA(Lys) + L-lysine + ATP = L-lysyl-tRNA(Lys) + AMP + diphosphate. The chain is Lysine--tRNA ligase from Haemophilus influenzae (strain 86-028NP).